The primary structure comprises 260 residues: MKQRIIDELKRIEQSYGVKIVYAVESGSRAWGFPSQDSDYDVRFIYVPKKEWYFSIEQERDVIEEPIHDLLDISGWELRKTLRLFKKSNPPLLEWLSSDIVYYEAFTTAEQLRKLRTEAFKPEASVYHYINMARRNVKDYLQGQEVKIKKYFYVLRPILACQWIEKHGTIPPMDFTVLMNELVAEPELKAEMETLLERKRRGEELDLEARIDVIHQFIETEIERIMEAAKELKAEKKDMTSELNRLLLNTVEEVWKDGGS.

The stretch at isoleucine 214–glutamate 252 forms a coiled coil.

This is an uncharacterized protein from Bacillus subtilis (strain 168).